The sequence spans 249 residues: General transcription factor IIF subunit 2 (249 aa).

Ala2 is subject to N-acetylalanine. N6-acetyllysine is present on residues Lys22, Lys33, and Lys137. At Ser142 the chain carries Phosphoserine. 2 residues coordinate DNA: Gly227 and His229. Ser248 bears the Phosphoserine mark.

Belongs to the TFIIF beta subunit family. Heterodimer of an alpha and a beta subunit. Interacts with HTATSF1 and GPBP1. Interacts with URI1. Interacts with GTF2B (via N-terminus); this interaction is inhibited in presence of GTF2F1. Part of TBP-based Pol II pre-initiation complex (PIC), in which Pol II core assembles with general transcription factors and other specific initiation factors including GTF2E1, GTF2E2, GTF2F1, GTF2F2, TCEA1, ERCC2, ERCC3, GTF2H2, GTF2H3, GTF2H4, GTF2H5, GTF2A1, GTF2A2, GTF2B and TBP; this large multi-subunit PIC complex mediates DNA unwinding and targets Pol II core to the transcription start site where the first phosphodiester bond forms.

It is found in the nucleus. TFIIF is a general transcription initiation factor that binds to RNA polymerase II and helps to recruit it to the initiation complex in collaboration with TFIIB. This chain is General transcription factor IIF subunit 2 (GTF2F2), found in Bos taurus (Bovine).